The following is a 339-amino-acid chain: tRNA pseudouridine synthase D (339 aa).

Asp-80 acts as the Nucleophile in catalysis. Positions 155–311 (GFPNYFTEQR…AKGFSWAFEP (157 aa)) constitute a TRUD domain.

It belongs to the pseudouridine synthase TruD family.

The enzyme catalyses uridine(13) in tRNA = pseudouridine(13) in tRNA. Responsible for synthesis of pseudouridine from uracil-13 in transfer RNAs. This is tRNA pseudouridine synthase D from Haemophilus influenzae (strain 86-028NP).